We begin with the raw amino-acid sequence, 300 residues long: Lipoyl synthase 2 (300 aa).

Residues cysteine 46, cysteine 51, cysteine 57, cysteine 72, cysteine 76, cysteine 79, and serine 294 each contribute to the [4Fe-4S] cluster site. The region spanning 58-283 (YAQKTATFLL…GKLAREMGFS (226 aa)) is the Radical SAM core domain.

Belongs to the radical SAM superfamily. Lipoyl synthase family. It depends on [4Fe-4S] cluster as a cofactor.

It is found in the cytoplasm. It carries out the reaction [[Fe-S] cluster scaffold protein carrying a second [4Fe-4S](2+) cluster] + N(6)-octanoyl-L-lysyl-[protein] + 2 oxidized [2Fe-2S]-[ferredoxin] + 2 S-adenosyl-L-methionine + 4 H(+) = [[Fe-S] cluster scaffold protein] + N(6)-[(R)-dihydrolipoyl]-L-lysyl-[protein] + 4 Fe(3+) + 2 hydrogen sulfide + 2 5'-deoxyadenosine + 2 L-methionine + 2 reduced [2Fe-2S]-[ferredoxin]. The protein operates within protein modification; protein lipoylation via endogenous pathway; protein N(6)-(lipoyl)lysine from octanoyl-[acyl-carrier-protein]: step 2/2. Functionally, catalyzes the radical-mediated insertion of two sulfur atoms into the C-6 and C-8 positions of the octanoyl moiety bound to the lipoyl domains of lipoate-dependent enzymes, thereby converting the octanoylated domains into lipoylated derivatives. This chain is Lipoyl synthase 2, found in Nostoc sp. (strain PCC 7120 / SAG 25.82 / UTEX 2576).